The chain runs to 432 residues: Guanine nucleotide-binding protein subunit alpha (432 aa).

The disordered stretch occupies residues 1 to 97 (MGGCMSTPEA…SKGNKDRSNQ (97 aa)). The N-myristoyl glycine moiety is linked to residue Gly-2. Cys-4 carries the S-palmitoyl cysteine lipid modification. Residues 21–52 (PSTSTSSRPPQASTSATATAAGAGTSAANGTA) show a composition bias toward low complexity. One can recognise a G-alpha domain in the interval 111-432 (KECKILLLGS…QNALRDSGIL (322 aa)). The segment at 114 to 127 (KILLLGSGESGKST) is G1 motif. Glu-122, Ser-123, Gly-124, Lys-125, Ser-126, Thr-127, Asp-230, Leu-255, Thr-261, Gly-283, Asn-349, Lys-350, Asp-352, and Ala-404 together coordinate GTP. Ser-126 is a Mg(2+) binding site. A G2 motif region spans residues 253–261 (DVLRARTKT). Thr-261 provides a ligand contact to Mg(2+). Residues 276-285 (IHMFDVGGQR) form a G3 motif region. Positions 345–352 (ILFLNKID) are G4 motif. The G5 motif stretch occupies residues 402-407 (TQATDT).

The protein belongs to the G-alpha family. As to quaternary structure, g proteins are composed of 3 units; alpha, beta and gamma. The alpha chain contains the guanine nucleotide binding site. Mg(2+) serves as cofactor.

In terms of biological role, guanine nucleotide-binding proteins (G proteins) are involved as modulators or transducers in various transmembrane signaling systems. Involved in the mating pathway. The polypeptide is Guanine nucleotide-binding protein subunit alpha (GPA1) (Cryptococcus neoformans var. neoformans serotype D (strain B-3501A) (Filobasidiella neoformans)).